We begin with the raw amino-acid sequence, 371 residues long: Carlactonoate CLA methyltransferase (371 aa).

Tyr21 contacts S-adenosyl-L-homocysteine. Gln28 serves as a coordination point for (11R)-carlactonoate. Residues Cys62, Asn67, Asp101, Leu102, Ser141, and Phe142 each coordinate S-adenosyl-L-homocysteine. Residues His162 and Trp163 each coordinate (11R)-carlactonoate. Asn180, Asp266, Tyr268, and Asp269 together coordinate Mg(2+).

Belongs to the methyltransferase superfamily. Type-7 methyltransferase family. SABATH subfamily. In terms of assembly, homodimer. Requires Mg(2+) as cofactor.

The catalysed reaction is (11R)-carlactonoate + S-adenosyl-L-methionine = (11R)-methyl carlactonoate + S-adenosyl-L-homocysteine. Its function is as follows. Methyltransferase involved in the biosynthesis of strigolactone natural products, bioactive compounds promoting plant fitness and soil microbe interactions, but preventing shoot branching. Catalyzes the biosynthesis of (11R)-methyl carlactonoate (MeCLA) from (11R)-carlactonoate (CLA), downstream of MAX1; MeCLA is probably biologically active as a hormone regulating shoot branching and serves as a precursor of non-canonical strigolactones (SLs). The chain is Carlactonoate CLA methyltransferase from Arabidopsis thaliana (Mouse-ear cress).